We begin with the raw amino-acid sequence, 216 residues long: Pyrophosphatase PpaX (216 aa).

Asp-9 serves as the catalytic Nucleophile.

Belongs to the HAD-like hydrolase superfamily. PpaX family. Mg(2+) serves as cofactor.

The enzyme catalyses diphosphate + H2O = 2 phosphate + H(+). Functionally, hydrolyzes pyrophosphate formed during P-Ser-HPr dephosphorylation by HPrK/P. Might play a role in controlling the intracellular pyrophosphate pool. This is Pyrophosphatase PpaX from Bacillus anthracis (strain A0248).